Here is a 418-residue protein sequence, read N- to C-terminus: Tyrosine--tRNA ligase (418 aa).

Tyr-34 is an L-tyrosine binding site. Residues 39-48 (PTADSLHLGH) carry the 'HIGH' region motif. L-tyrosine-binding residues include Tyr-169 and Gln-173. Positions 229 to 233 (KFGKS) match the 'KMSKS' region motif. Lys-232 contacts ATP. One can recognise an S4 RNA-binding domain in the interval 352 to 418 (NNIVELLVSS…GKKKYFVLTY (67 aa)).

Belongs to the class-I aminoacyl-tRNA synthetase family. TyrS type 1 subfamily. Homodimer.

The protein localises to the cytoplasm. The enzyme catalyses tRNA(Tyr) + L-tyrosine + ATP = L-tyrosyl-tRNA(Tyr) + AMP + diphosphate + H(+). Its function is as follows. Catalyzes the attachment of tyrosine to tRNA(Tyr) in a two-step reaction: tyrosine is first activated by ATP to form Tyr-AMP and then transferred to the acceptor end of tRNA(Tyr). The protein is Tyrosine--tRNA ligase of Streptococcus pneumoniae (strain 70585).